We begin with the raw amino-acid sequence, 420 residues long: Dihydrolipoyllysine-residue succinyltransferase component of 2-oxoglutarate dehydrogenase complex (420 aa).

Residues 1–76 (MAEVKVPELA…EVGQAVAVVG (76 aa)) form the Lipoyl-binding domain. Lys-42 carries the post-translational modification N6-lipoyllysine. The interval 75 to 201 (VGEGQVNTSN…EKMSRRKKTA (127 aa)) is disordered. A compositionally biased stretch (polar residues) spans 81 to 90 (NTSNDSSNES). Residues 91–102 (SQKDEAKEKETP) are compositionally biased toward basic and acidic residues. Residues 103 to 127 (KQSNPNSSESENTQDNSQQRINATP) show a composition bias toward polar residues. The Peripheral subunit-binding (PSBD) domain occupies 124 to 160 (NATPSARRHARKNGVDLSEVSGKGNDVLRKDDVENSQ). Residues 149-158 (DVLRKDDVEN) show a composition bias toward basic and acidic residues. Positions 159–188 (SQKSSSQTAKSESKSQNSGSKQSNNNPSKP) are enriched in low complexity. Catalysis depends on residues His-391 and Asp-395.

This sequence belongs to the 2-oxoacid dehydrogenase family. Forms a 24-polypeptide structural core with octahedral symmetry. Part of the 2-oxoglutarate dehydrogenase (OGDH) complex composed of E1 (2-oxoglutarate dehydrogenase), E2 (dihydrolipoamide succinyltransferase) and E3 (dihydrolipoamide dehydrogenase); the complex contains multiple copies of the three enzymatic components (E1, E2 and E3). (R)-lipoate is required as a cofactor.

The catalysed reaction is N(6)-[(R)-dihydrolipoyl]-L-lysyl-[protein] + succinyl-CoA = N(6)-[(R)-S(8)-succinyldihydrolipoyl]-L-lysyl-[protein] + CoA. It participates in amino-acid degradation; L-lysine degradation via saccharopine pathway; glutaryl-CoA from L-lysine: step 6/6. In terms of biological role, E2 component of the 2-oxoglutarate dehydrogenase (OGDH) complex which catalyzes the second step in the conversion of 2-oxoglutarate to succinyl-CoA and CO(2). The protein is Dihydrolipoyllysine-residue succinyltransferase component of 2-oxoglutarate dehydrogenase complex (odhB) of Staphylococcus epidermidis (strain ATCC 12228 / FDA PCI 1200).